We begin with the raw amino-acid sequence, 180 residues long: F17 fimbrial protein (180 aa).

A signal peptide spans M1–A21. C37 and C77 are disulfide-bonded.

It belongs to the fimbrial protein family.

It localises to the fimbrium. Its function is as follows. Fimbriae (also called pili), polar filaments radiating from the surface of the bacterium to a length of 0.5-1.5 micrometers and numbering 100-300 per cell, enable bacteria to colonize the epithelium of specific host organs. The polypeptide is F17 fimbrial protein (F17a-A) (Escherichia coli).